A 475-amino-acid chain; its full sequence is 7-dehydrocholesterol reductase (475 aa).

Positions 1–21 are disordered; it reads MAAKSQPNIPKAKSLDGVTND. At Ser14 the chain carries Phosphoserine. 6 helical membrane passes run 40-60, 154-174, 177-197, 266-286, 306-326, and 331-351; these read LASV…FIMA, THLL…TIIF, WIPL…FAMV, VTNA…DFFW, LGWG…LYLV, and QLST…YYIF. NADP(+) is bound by residues Lys358, Arg362, Leu395, Trp400, and 407 to 408; that span reads NY. A helical membrane pass occupies residues 420 to 440; sequence LACGGGHLLPYFYIIYMAILL. Residues Asp447, 451-455, and Tyr462 contribute to the NADP(+) site; that span reads CASKY.

Belongs to the ERG4/ERG24 family. Interacts with DHCR24; this interaction regulates DHCR7 activity. Interacts with TMEM147. As to expression, widely expressed. Most abundant in adrenal gland, liver, testis, and brain.

The protein localises to the endoplasmic reticulum membrane. It catalyses the reaction cholesterol + NADP(+) = 7-dehydrocholesterol + NADPH + H(+). It carries out the reaction 7-dehydrodesmosterol + NADPH + H(+) = desmosterol + NADP(+). The catalysed reaction is 5,6alpha-epoxy-5alpha-cholestan-3beta-ol + H2O = 5alpha-cholestane-3beta,5,6beta-triol. The enzyme catalyses 5,6beta-epoxy-5beta-cholestan-3beta-ol + H2O = 5alpha-cholestane-3beta,5,6beta-triol. It participates in steroid biosynthesis; cholesterol biosynthesis. With respect to regulation, 7-DHC reductase and cholesterol-5,6-epoxide hydrolase (ChEH) activities are inhibited by tamoxifen and the selective AEBS ligand (4-benzyl-phenoxy)-ethyl-N-pyrrolidine (PBPE). ChEH activity is inhibited by oleic acid. In terms of biological role, oxidoreductase that catalyzes the last step of the cholesterol synthesis pathway, which transforms cholesta-5,7-dien-3beta-ol (7-dehydrocholesterol,7-DHC) into cholesterol by reducing the C7-C8 double bond of its sterol core. Can also metabolize cholesta-5,7,24-trien-3beta-ol (7-dehydrodemosterol, 7-DHD) to desmosterol, which is then metabolized by the Delta(24)-sterol reductase (DHCR24) to cholesterol. Modulates ferroptosis (a form of regulated cell death driven by iron-dependent lipid peroxidation) through the metabolic breakdown of the anti-ferroptotic metabolites 7-DHC and 7-DHD which, when accumulated, divert the propagation of peroxyl radical-mediated damage from phospholipid components to its sterol core, protecting plasma and mitochondrial membranes from phospholipid autoxidation. Functionally, component of the microsomal antiestrogen binding site (AEBS), a multiproteic complex at the ER membrane that consists of an association between cholestenol Delta-isomerase/EBP and DHCR7. This complex is responsible for cholesterol-5,6-epoxide hydrolase (ChEH) activity, which consists in the hydration of cholesterol-5,6-epoxides (5,6-EC) into cholestane-3beta,5alpha,6beta-triol (CT). The precise role of each component of this complex has not been described yet. The sequence is that of 7-dehydrocholesterol reductase from Homo sapiens (Human).